Consider the following 324-residue polypeptide: uncharacterized protein (324 aa).

To the C-terminal of para-aminobenzoate synthase component I.

This is an uncharacterized protein from Pasteurella multocida (strain Pm70).